The sequence spans 118 residues: V-type proton ATPase subunit G 1 (118 aa).

N-acetylalanine is present on Ala2.

This sequence belongs to the V-ATPase G subunit family. V-ATPase is a heteromultimeric enzyme made up of two complexes: the ATP-hydrolytic V1 complex and the proton translocation V0 complex. The V1 complex consists of three catalytic AB heterodimers that form a heterohexamer, three peripheral stalks each consisting of EG heterodimers, one central rotor including subunits D and F, and the regulatory subunits C and H. The proton translocation complex V0 consists of the proton transport subunit a, a ring of proteolipid subunits c9c'', rotary subunit d, subunits e and f, and the accessory subunits ATP6AP1/Ac45 and ATP6AP2/PRR. As to expression, kidney; localizes to early distal nephron, encompassing thick ascending limbs and distal convoluted tubules (at protein level). Ubiquitous.

The protein localises to the apical cell membrane. Subunit of the V1 complex of vacuolar(H+)-ATPase (V-ATPase), a multisubunit enzyme composed of a peripheral complex (V1) that hydrolyzes ATP and a membrane integral complex (V0) that translocates protons. V-ATPase is responsible for acidifying and maintaining the pH of intracellular compartments and in some cell types, is targeted to the plasma membrane, where it is responsible for acidifying the extracellular environment. In aerobic conditions, involved in intracellular iron homeostasis, thus triggering the activity of Fe(2+) prolyl hydroxylase (PHD) enzymes, and leading to HIF1A hydroxylation and subsequent proteasomal degradation. The chain is V-type proton ATPase subunit G 1 (Atp6v1g1) from Mus musculus (Mouse).